A 183-amino-acid polypeptide reads, in one-letter code: Adenine phosphoribosyltransferase (183 aa).

The protein belongs to the purine/pyrimidine phosphoribosyltransferase family. Homodimer.

It is found in the cytoplasm. It carries out the reaction AMP + diphosphate = 5-phospho-alpha-D-ribose 1-diphosphate + adenine. Its pathway is purine metabolism; AMP biosynthesis via salvage pathway; AMP from adenine: step 1/1. Catalyzes a salvage reaction resulting in the formation of AMP, that is energically less costly than de novo synthesis. The protein is Adenine phosphoribosyltransferase of Shewanella piezotolerans (strain WP3 / JCM 13877).